Consider the following 1218-residue polypeptide: Structural maintenance of chromosomes protein 2 (1218 aa).

An ATP-binding site is contributed by 32-39 (GLNGSGKS). Positions 209-517 (VKLKKEKEEY…INSVKIDYKI (309 aa)) form a coiled coil. The 130-residue stretch at 525-654 (DVLGQIYKLI…CSNVDLCKKI (130 aa)) folds into the SMC hinge domain. Coiled coils occupy residues 693-949 (LNYE…DTVK) and 978-1045 (RHDV…KKSE).

It belongs to the SMC family. SMC2 subfamily.

The protein localises to the nucleus. Functionally, may play a role in the conversion of interphase chromatin into condensed chromosomes. This chain is Structural maintenance of chromosomes protein 2, found in Plasmodium falciparum (isolate 3D7).